The chain runs to 623 residues: Glutathione import ATP-binding protein GsiA (623 aa).

2 consecutive ABC transporter domains span residues 15–269 (VENL…RALL) and 314–564 (LRVR…RKLL). ATP-binding positions include 49–56 (GESGSGKS) and 357–364 (GESGSGKS).

Belongs to the ABC transporter superfamily. Glutathione importer (TC 3.A.1.5.11) family. As to quaternary structure, the complex is composed of two ATP-binding proteins (GsiA), two transmembrane proteins (GsiC and GsiD) and a solute-binding protein (GsiB).

Its subcellular location is the cell inner membrane. The catalysed reaction is glutathione(out) + ATP + H2O = glutathione(in) + ADP + phosphate + H(+). Its function is as follows. Part of the ABC transporter complex GsiABCD involved in glutathione import. Responsible for energy coupling to the transport system. In Escherichia coli O1:K1 / APEC, this protein is Glutathione import ATP-binding protein GsiA.